Consider the following 340-residue polypeptide: Methionine import ATP-binding protein MetN (340 aa).

The 240-residue stretch at 2 to 241 (IRIENLTKIY…PQSSVAKEFI (240 aa)) folds into the ABC transporter domain. Residue 38 to 45 (GLSGAGKS) coordinates ATP.

Belongs to the ABC transporter superfamily. Methionine importer (TC 3.A.1.24) family. In terms of assembly, the complex is composed of two ATP-binding proteins (MetN), two transmembrane proteins (MetI) and a solute-binding protein (MetQ).

It is found in the cell membrane. The catalysed reaction is L-methionine(out) + ATP + H2O = L-methionine(in) + ADP + phosphate + H(+). It catalyses the reaction D-methionine(out) + ATP + H2O = D-methionine(in) + ADP + phosphate + H(+). Functionally, part of the ABC transporter complex MetNIQ involved in methionine import. Responsible for energy coupling to the transport system. This chain is Methionine import ATP-binding protein MetN, found in Desulfitobacterium hafniense (strain Y51).